The primary structure comprises 380 residues: Ceramide synthase 2 (380 aa).

The Lumenal segment spans residues 1-40 (MLQTLYDYFWWERLWLPVNLTWADLEDKDGRVYAKASDLY). N-linked (GlcNAc...) asparagine glycosylation occurs at asparagine 19. Residues 41 to 61 (ITLPLALLFLVIRYFFELYVA) form a helical membrane-spanning segment. The segment at 67–128 (LLNVKEKTRL…RRRRNQDRPS (62 aa)) is homeobox-like. The TLC domain occupies 131–332 (KKFREASWRF…ILRMAHKFIT (202 aa)). A run of 4 helical transmembrane segments spans residues 140–160 (FTYY…KPWF), 175–195 (IIPS…SLLF), 209–229 (QIIH…ANYV), and 264–284 (LFIV…PFWI). The Last loop motif motif lies at 291–300 (YPLELYPAFF). The chain crosses the membrane as a helical span at residues 304 to 324 (FFNFMMAVLQMLHIFWAYFIL). The Cytoplasmic segment spans residues 325-380 (RMAHKFITGKLIEDERSDREETESSEGEETAAGAGAKSRLLANGHPILNNNHPKND). The interval 340 to 380 (RSDREETESSEGEETAAGAGAKSRLLANGHPILNNNHPKND) is disordered. Residue serine 341 is modified to Phosphoserine. Over residues 344–353 (EETESSEGEE) the composition is skewed to acidic residues. Phosphothreonine is present on threonine 346. Residues serine 348 and serine 349 each carry the phosphoserine modification.

In terms of assembly, interacts with ATP6V0C, ASGR1, ASGR2 and SLC22A1/OCT1. Interacts with ELOV1, HSD17B12 and TECR. Interacts with NDUFS2. Interacts with PAQR4; the interaction regulates the stability and activity of CERS2 and is inhibited in presence of ceramides. In terms of processing, acetylated. Deacetylation by SIRT3 increases enzyme activity and promotes mitochondrial ceramide accumulation. Phosphorylated at the C-terminus by CK2, leading to increase the ceramide synthase activity. In terms of tissue distribution, broadly expressed, with highest levels in liver and kidney. In brain is detected in neurons, oligodentrocytes, ependymal cells and epithelial cells of the choroid plexus. In kidney is detected in collecting ducts and to a lesser degree in proximal tubules.

The protein localises to the endoplasmic reticulum membrane. The enzyme catalyses a very long-chain fatty acyl-CoA + a sphingoid base = an N-(very-long-chain fatty acyl)-sphingoid base + CoA + H(+). It carries out the reaction docosanoyl-CoA + sphinganine = N-docosanoylsphinganine + CoA + H(+). It catalyses the reaction tetracosanoyl-CoA + sphinganine = N-tetracosanoylsphinganine + CoA + H(+). The catalysed reaction is hexacosanoyl-CoA + sphinganine = N-hexacosanoylsphinganine + CoA + H(+). The enzyme catalyses (15Z)-tetracosenoyl-CoA + sphinganine = N-(15Z-tetracosenoyl)-sphinganine + CoA + H(+). It carries out the reaction 2-hydroxytetracosanoyl-CoA + sphinganine = N-(2-hydroxytetracosanoyl)-sphinganine + CoA + H(+). It catalyses the reaction 2-hydroxydocosanoyl-CoA + sphinganine = N-(2-hydroxydocosanoyl)-sphinganine + CoA + H(+). The catalysed reaction is 2-hydroxytetracosenoyl-CoA + sphinganine = N-(2-hydroxytetracosenoyl)-sphinganine + CoA + H(+). The enzyme catalyses tetracosenoyl-CoA + sphinganine = an N-tetracosenoylsphinganine + CoA + H(+). It carries out the reaction hexacosenoyl-CoA + sphinganine = N-hexacosenoylsphinganine + CoA + H(+). It catalyses the reaction tetracosanoyl-CoA + sphing-4-enine = N-tetracosanoyl-sphing-4-enine + CoA + H(+). The catalysed reaction is tetracosenoyl-CoA + sphing-4-enine = N-(tetracosenoyl)-sphing-4-enine + CoA + H(+). The enzyme catalyses heptadecasphing-4-enine + tetracosanoyl-CoA = N-tetracosanoyl-heptadecasphing-4-enine + CoA + H(+). It carries out the reaction a fatty acyl-CoA + sphing-4-enine = an N-acylsphing-4-enine + CoA + H(+). It catalyses the reaction sphing-4-enine + hexadecanoyl-CoA = N-hexadecanoylsphing-4-enine + CoA + H(+). The catalysed reaction is sphing-4-enine + octadecanoyl-CoA = N-octadecanoylsphing-4-enine + CoA + H(+). The enzyme catalyses eicosanoyl-CoA + sphing-4-enine = N-eicosanoyl-sphing-4-enine + CoA + H(+). It carries out the reaction sphinganine + hexadecanoyl-CoA = N-hexadecanoylsphinganine + CoA + H(+). It catalyses the reaction sphinganine + octadecanoyl-CoA = N-(octadecanoyl)-sphinganine + CoA + H(+). The catalysed reaction is sphinganine + (9Z)-octadecenoyl-CoA = N-(9Z-octadecenoyl)-sphinganine + CoA + H(+). The enzyme catalyses eicosanoyl-CoA + sphinganine = N-eicosanoylsphinganine + CoA + H(+). Its pathway is lipid metabolism; sphingolipid metabolism. Its activity is regulated as follows. Ceramide synthase activity is inhibited by sphingosine-1-phosphate. Functionally, ceramide synthase that catalyzes the transfer of the acyl chain from acyl-CoA to a sphingoid base, with high selectivity toward very-long-chain fatty acyl-CoA (chain length C22-C27). N-acylates sphinganine and sphingosine bases to form dihydroceramides and ceramides in de novo synthesis and salvage pathways, respectively. Plays a non-redundant role in the synthesis of ceramides with very-long-chain fatty acids in kidney, liver and brain. Regulates the abundance of myelin-specific sphingolipids galactosylceramide and sulfatide that affects myelin sheath architecture and motor neuron functions. The sequence is that of Ceramide synthase 2 from Mus musculus (Mouse).